Reading from the N-terminus, the 270-residue chain is Co-chaperone protein DjlA (270 aa).

Over 1–6 (MQYWGK) the chain is Periplasmic. A helical transmembrane segment spans residues 7 to 31 (IIGVAVALMMGGGFWGVVLGLLVGH). Topologically, residues 32 to 270 (MFDKARSRKM…ELIKEQKGFK (239 aa)) are cytoplasmic. The 67-residue stretch at 204 to 270 (DACNVLGVKT…ELIKEQKGFK (67 aa)) folds into the J domain.

In terms of assembly, homodimer.

Its subcellular location is the cell inner membrane. Regulatory DnaK co-chaperone. Direct interaction between DnaK and DjlA is needed for the induction of the wcaABCDE operon, involved in the synthesis of a colanic acid polysaccharide capsule, possibly through activation of the RcsB/RcsC phosphotransfer signaling pathway. The colanic acid capsule may help the bacterium survive conditions outside the host. This is Co-chaperone protein DjlA from Salmonella paratyphi A (strain ATCC 9150 / SARB42).